A 240-amino-acid chain; its full sequence is MSVLKTLVINPRSGVKPTATLFFLHGLGDSSAGWSDVAQMLSQRPSLSHVRFVLPNAPIQPVTLNMGMPMPSWFDILALDDLSGAEDEAGLLKSTDEIKKLIKAENDGTAKDLDGHKIPSERIVVGGFSQGGAISLLTGLTNPTPVAGVAALSTWLPLRAKIATLRTPTSKTLKVFQAHGDADPVVKYEYGQRTVDFLKNELALNDKDVEFHTYPRMPHSACPEEIRDLAAFLEKVIPAQ.

Active-site charge relay system residues include Ser129, Asp183, and His219.

Belongs to the AB hydrolase superfamily. AB hydrolase 2 family.

Its subcellular location is the cytoplasm. The protein resides in the nucleus. The enzyme catalyses S-hexadecanoyl-L-cysteinyl-[protein] + H2O = L-cysteinyl-[protein] + hexadecanoate + H(+). Functionally, hydrolyzes fatty acids from S-acylated cysteine residues in proteins with a strong preference for palmitoylated G-alpha proteins over other acyl substrates. Mediates the deacylation of G-alpha proteins such as GPA1 in vivo, but has weak or no activity toward palmitoylated Ras proteins. Has weak lysophospholipase activity in vitro; however such activity may not exist in vivo. This is Acyl-protein thioesterase 1 from Mycosarcoma maydis (Corn smut fungus).